The primary structure comprises 413 residues: Aminopeptidase PepS (413 aa).

A divalent metal cation-binding residues include E253, E319, E343, H348, H381, and D383.

It belongs to the peptidase M29 family. As to quaternary structure, monomer. Co(2+) is required as a cofactor. Zn(2+) serves as cofactor. It depends on Mg(2+) as a cofactor.

Its function is as follows. Exhibits a high specificity towards peptides possessing arginine or aromatic amino acids at the N-terminus. Could be involved both in bacterial growth by supplying amino acids. The protein is Aminopeptidase PepS (pepS) of Streptococcus thermophilus.